We begin with the raw amino-acid sequence, 221 residues long: Protein-L-isoaspartate O-methyltransferase (221 aa).

The active site involves Ser60.

The protein belongs to the methyltransferase superfamily. L-isoaspartyl/D-aspartyl protein methyltransferase family.

The protein resides in the cytoplasm. The enzyme catalyses [protein]-L-isoaspartate + S-adenosyl-L-methionine = [protein]-L-isoaspartate alpha-methyl ester + S-adenosyl-L-homocysteine. Its function is as follows. Catalyzes the methyl esterification of L-isoaspartyl residues in peptides and proteins that result from spontaneous decomposition of normal L-aspartyl and L-asparaginyl residues. It plays a role in the repair and/or degradation of damaged proteins. This chain is Protein-L-isoaspartate O-methyltransferase, found in Rhodospirillum centenum (strain ATCC 51521 / SW).